The chain runs to 359 residues: Holliday junction branch migration complex subunit RuvB (359 aa).

A disordered region spans residues 1 to 22 (MAIVSSNAEPSKGAPRPKPSRV). Positions 13–204 (GAPRPKPSRV…FGLIQRLEFY (192 aa)) are large ATPase domain (RuvB-L). Residues leucine 43, arginine 44, glycine 85, lysine 88, threonine 89, threonine 90, arginine 194, tyrosine 204, and arginine 241 each coordinate ATP. Mg(2+) is bound at residue threonine 89. Residues 205–276 (GQEDLQAIVM…LVDEALTLHR (72 aa)) are small ATPAse domain (RuvB-S). Residues 279 to 359 (GKGLDASDRR…GWPADEGDAA (81 aa)) are head domain (RuvB-H). The DNA site is built by arginine 334 and arginine 339.

It belongs to the RuvB family. In terms of assembly, homohexamer. Forms an RuvA(8)-RuvB(12)-Holliday junction (HJ) complex. HJ DNA is sandwiched between 2 RuvA tetramers; dsDNA enters through RuvA and exits via RuvB. An RuvB hexamer assembles on each DNA strand where it exits the tetramer. Each RuvB hexamer is contacted by two RuvA subunits (via domain III) on 2 adjacent RuvB subunits; this complex drives branch migration. In the full resolvosome a probable DNA-RuvA(4)-RuvB(12)-RuvC(2) complex forms which resolves the HJ.

Its subcellular location is the cytoplasm. The enzyme catalyses ATP + H2O = ADP + phosphate + H(+). Its function is as follows. The RuvA-RuvB-RuvC complex processes Holliday junction (HJ) DNA during genetic recombination and DNA repair, while the RuvA-RuvB complex plays an important role in the rescue of blocked DNA replication forks via replication fork reversal (RFR). RuvA specifically binds to HJ cruciform DNA, conferring on it an open structure. The RuvB hexamer acts as an ATP-dependent pump, pulling dsDNA into and through the RuvAB complex. RuvB forms 2 homohexamers on either side of HJ DNA bound by 1 or 2 RuvA tetramers; 4 subunits per hexamer contact DNA at a time. Coordinated motions by a converter formed by DNA-disengaged RuvB subunits stimulates ATP hydrolysis and nucleotide exchange. Immobilization of the converter enables RuvB to convert the ATP-contained energy into a lever motion, pulling 2 nucleotides of DNA out of the RuvA tetramer per ATP hydrolyzed, thus driving DNA branch migration. The RuvB motors rotate together with the DNA substrate, which together with the progressing nucleotide cycle form the mechanistic basis for DNA recombination by continuous HJ branch migration. Branch migration allows RuvC to scan DNA until it finds its consensus sequence, where it cleaves and resolves cruciform DNA. This is Holliday junction branch migration complex subunit RuvB from Synechococcus sp. (strain CC9311).